The following is a 424-amino-acid chain: Zona pellucida sperm-binding protein 3 (424 aa).

A signal peptide spans 1–22; the sequence is MGLSYGLFICFLLWAGTGLCYP. Over 23-383 the chain is Extracellular; sequence PTTTEDKTHP…VEGSTSPHTS (361 aa). In terms of domain architecture, ZP spans 43–305; the sequence is ECRHAWLVVN…KACSFIKSSN (263 aa). Disulfide bonds link cysteine 44–cysteine 138 and cysteine 76–cysteine 97. N-linked (GlcNAc...) asparagine glycosylation occurs at asparagine 52. 2 N-linked (GlcNAc...) asparagine glycosylation sites follow: asparagine 123 and asparagine 145. O-linked (GalNAc...) threonine glycosylation is found at threonine 154, threonine 160, and threonine 161. Cystine bridges form between cysteine 215-cysteine 280 and cysteine 237-cysteine 298. The propeptide at 349–424 is removed in mature form; sequence RRHVTEEADI…PMICPVSASQ (76 aa). Residues 384–404 traverse the membrane as a helical segment; that stretch reads VMVGIGLATVLSLTLATIVLG. The Cytoplasmic segment spans residues 405-424; it reads LARRHHTASRPMICPVSASQ.

It belongs to the ZP domain family. ZPC subfamily. In terms of assembly, polymers of ZP2 and ZP3 organized into long filaments cross-linked by ZP1 homodimers. Interacts with ZP1 and ZP2. Post-translationally, proteolytically cleaved before the transmembrane segment to yield the secreted ectodomain incorporated in the zona pellucida. In terms of processing, N-glycosylated. O-glycosylated; removal of O-linked glycans may play an important role in the post-fertilization block to polyspermy. As to expression, expressed in oocytes.

Its subcellular location is the zona pellucida. It is found in the cell membrane. Component of the zona pellucida, an extracellular matrix surrounding oocytes which mediates sperm binding, induction of the acrosome reaction and prevents post-fertilization polyspermy. The zona pellucida is composed of 3 to 4 glycoproteins, ZP1, ZP2, ZP3, and ZP4. ZP3 is essential for sperm binding and zona matrix formation. The sequence is that of Zona pellucida sperm-binding protein 3 (ZP3) from Felis catus (Cat).